Reading from the N-terminus, the 430-residue chain is Putrescine 2-hydroxylase (430 aa).

In terms of domain architecture, Rieske spans 88 to 203 (LYVGHQKLVP…LRDCHGLLFE (116 aa)). Residues C128, H130, C162, and H165 each coordinate [2Fe-2S] cluster.

The protein belongs to the bacterial ring-hydroxylating dioxygenase alpha subunit family. [2Fe-2S] cluster is required as a cofactor.

Rieske-type iron sulfur protein that can catalyze in vitro the 2-hydroxylation of putrescine, forming 2-hydroxyputrescine. May be involved in the biosynthesis of the cyclic hydroxamate siderophore alcaligin. The chain is Putrescine 2-hydroxylase from Bordetella bronchiseptica (strain ATCC BAA-588 / NCTC 13252 / RB50) (Alcaligenes bronchisepticus).